Reading from the N-terminus, the 432-residue chain is Glutamate-1-semialdehyde 2,1-aminomutase 1 (432 aa).

N6-(pyridoxal phosphate)lysine is present on lysine 272.

It belongs to the class-III pyridoxal-phosphate-dependent aminotransferase family. HemL subfamily. Homodimer. The cofactor is pyridoxal 5'-phosphate.

The protein localises to the cytoplasm. The catalysed reaction is (S)-4-amino-5-oxopentanoate = 5-aminolevulinate. The protein operates within porphyrin-containing compound metabolism; protoporphyrin-IX biosynthesis; 5-aminolevulinate from L-glutamyl-tRNA(Glu): step 2/2. The sequence is that of Glutamate-1-semialdehyde 2,1-aminomutase 1 from Exiguobacterium sibiricum (strain DSM 17290 / CCUG 55495 / CIP 109462 / JCM 13490 / 255-15).